Reading from the N-terminus, the 516-residue chain is MTLDLDALDRALDALPNLFRGPGGVAGVVKDGQVVASRAWGYADLTRRRPMETGTRLPICSISKQFTCGVLLDTLGDTAAYDARVAEFLPQFEGPLPTLRQLCDNQSGLRDYWALTVLQGAEATQTFRREDALPLIARMKTGHFPPGTAYSYCNCNFRIVSEILESETGRALPDLYAERIFGPAGMRTAELTSDTRHPADEVVGYEGSDAVGFFPADNGIFWIGDAGISASLQDMLAYESWIDATRDDENSIYRRISVPPAYVCGTPASYGFGLSHETVAGLKVTGHGGALRGFRAQRFHAADERLSVVVIFNHEASAHAAASSLLAAALGHEAPKGAGPEGWAGQWLDPESGLLLRVGEDAEGLTLRFATGPDRLTVGEDGVPRGAGVSLAREGATLVMNRTSDNLTVRAEPLPVVAVADAGEIAGRYHARELEADLVIEARDGGAYAGFEGLLGAGPMERLHPVGPDVWIVTTRRSMDAPAPGDWTLQVRREGGAVAGLRLGCWLARRIDYARV.

Residue Ser-61 is the Nucleophile of the active site. Catalysis depends on Lys-64, which acts as the Proton donor/acceptor. Residues Arg-476–Asp-486 form an important for specificity region. Asp-480 contributes to the substrate binding site.

Belongs to the peptidase S12 family. In terms of assembly, homodimer.

It carries out the reaction Release of an N-terminal D-amino acid from a peptide, Xaa-|-Yaa-, in which Xaa is preferably D-Ala, D-Ser or D-Thr. D-amino acid amides and methyl esters also are hydrolyzed, as is glycine amide.. Inhibited by beta-lactam compounds such as 6-aminopenicillic acid, 7-aminocephalosporanic acid, benzylpenicillin and ampicillin. Inhibited by p-chloromercuribenzoate. Its function is as follows. Hydrolyzes N-terminal residues in D-amino acid-containing peptides. The protein is D-aminopeptidase of Cereibacter sphaeroides (strain ATCC 17029 / ATH 2.4.9) (Rhodobacter sphaeroides).